The sequence spans 159 residues: Ribosomal RNA large subunit methyltransferase H (159 aa).

S-adenosyl-L-methionine contacts are provided by residues L76, G108, and 127 to 132 (FGRMTL).

The protein belongs to the RNA methyltransferase RlmH family. As to quaternary structure, homodimer.

The protein localises to the cytoplasm. The catalysed reaction is pseudouridine(1915) in 23S rRNA + S-adenosyl-L-methionine = N(3)-methylpseudouridine(1915) in 23S rRNA + S-adenosyl-L-homocysteine + H(+). Functionally, specifically methylates the pseudouridine at position 1915 (m3Psi1915) in 23S rRNA. The protein is Ribosomal RNA large subunit methyltransferase H of Lactococcus lactis subsp. cremoris (strain SK11).